The following is a 574-amino-acid chain: E3 ubiquitin-protein ligase TRIM23 (574 aa).

The RING-type; degenerate zinc finger occupies 31 to 76 (CGVCEDVFSLQGDKVPRLLLCGHTVCHDCLTRLPLHGRAIRCPFDR). The segment at 122–168 (ESIIRCDEDEAHLASVYCTVCATHLCSECSQVTHSTKTLAKHRRVPL) adopts a B box-type; degenerate zinc-finger fold. A coiled-coil region spans residues 352-379 (RVVLAKQEITRLLETLQKQQQQFTEVAD). Residues 390–574 (TFTKDNRVHI…LVAAGVLDVA (185 aa)) form an ARF-like region. Residues 411 to 418 (GLDGAGKT), 454 to 458 (DVGGK), and 513 to 516 (NKQD) each bind GTP.

This sequence in the C-terminal section; belongs to the small GTPase superfamily. Arf family. As to quaternary structure, homodimer. Interacts with PSCD1. Interacts with UBE2D2. Interacts with TBK1 (via N-terminal kinase domain) and p62/SQSTM1. (Microbial infection) Interacts with human cytomegalovirus protein UL144; this interaction might cause autoubiquitination of TRAF6, leading to NF-kappa-B activation.

The protein localises to the cytoplasm. It is found in the endomembrane system. It localises to the golgi apparatus membrane. The protein resides in the lysosome membrane. The enzyme catalyses S-ubiquitinyl-[E2 ubiquitin-conjugating enzyme]-L-cysteine + [acceptor protein]-L-lysine = [E2 ubiquitin-conjugating enzyme]-L-cysteine + N(6)-ubiquitinyl-[acceptor protein]-L-lysine.. It participates in protein modification; protein ubiquitination. Acts as an E3 ubiquitin-protein ligase. Plays an essential role in autophagy activation during viral infection. Mechanistically, activates TANK-binding kinase 1/TBK1 by facilitating its dimerization and ability to phosphorylate the selective autophagy receptor SQSTM1. In order to achieve this function, TRIM23 mediates 'Lys-27'-linked auto-ubiquitination of its ADP-ribosylation factor (ARF) domain to induce its GTPase activity and its recruitment to autophagosomes. Functionally, (Microbial infection) Mediates TRAF6 auto-ubiquitination in the presence of human cytomegalovirus protein UL144, resulting in the virally controlled activation of NF-kappa-B stimulation at early times of HCMV infection. This is E3 ubiquitin-protein ligase TRIM23 (TRIM23) from Homo sapiens (Human).